The primary structure comprises 305 residues: Ribonuclease Z (305 aa).

Zn(2+) is bound by residues histidine 63, histidine 65, aspartate 67, histidine 68, histidine 142, aspartate 209, and histidine 267. The Proton acceptor role is filled by aspartate 67.

It belongs to the RNase Z family. In terms of assembly, homodimer. Zn(2+) serves as cofactor.

It carries out the reaction Endonucleolytic cleavage of RNA, removing extra 3' nucleotides from tRNA precursor, generating 3' termini of tRNAs. A 3'-hydroxy group is left at the tRNA terminus and a 5'-phosphoryl group is left at the trailer molecule.. In terms of biological role, zinc phosphodiesterase, which displays some tRNA 3'-processing endonuclease activity. Probably involved in tRNA maturation, by removing a 3'-trailer from precursor tRNA. In Nocardia farcinica (strain IFM 10152), this protein is Ribonuclease Z.